The chain runs to 118 residues: Basic phospholipase A2 PA-12A (118 aa).

Intrachain disulfides connect cysteine 11/cysteine 71, cysteine 27/cysteine 117, cysteine 29/cysteine 45, cysteine 44/cysteine 98, cysteine 51/cysteine 91, cysteine 60/cysteine 84, and cysteine 78/cysteine 89. Tyrosine 28, glycine 30, and glycine 32 together coordinate Ca(2+). The active site involves histidine 48. Ca(2+) is bound at residue aspartate 49. Residue aspartate 92 is part of the active site.

Belongs to the phospholipase A2 family. Group I subfamily. D49 sub-subfamily. The cofactor is Ca(2+). As to expression, expressed by the venom gland.

Its subcellular location is the secreted. The catalysed reaction is a 1,2-diacyl-sn-glycero-3-phosphocholine + H2O = a 1-acyl-sn-glycero-3-phosphocholine + a fatty acid + H(+). Functionally, PLA2 catalyzes the calcium-dependent hydrolysis of the 2-acyl groups in 3-sn-phosphoglycerides. The chain is Basic phospholipase A2 PA-12A from Pseudechis australis (Mulga snake).